The primary structure comprises 381 residues: Homoserine O-succinyltransferase (381 aa).

Residues 45-360 (NAVLVCHALN…PHGHDAFLLD (316 aa)) enclose the AB hydrolase-1 domain. Catalysis depends on serine 151, which acts as the Nucleophile. Arginine 221 provides a ligand contact to substrate. Catalysis depends on residues aspartate 321 and histidine 354. Aspartate 355 contacts substrate.

The protein belongs to the AB hydrolase superfamily. MetX family. Homodimer.

It localises to the cytoplasm. The catalysed reaction is L-homoserine + succinyl-CoA = O-succinyl-L-homoserine + CoA. It participates in amino-acid biosynthesis; L-methionine biosynthesis via de novo pathway; O-succinyl-L-homoserine from L-homoserine: step 1/1. Its function is as follows. Transfers a succinyl group from succinyl-CoA to L-homoserine, forming succinyl-L-homoserine. This is Homoserine O-succinyltransferase from Burkholderia lata (strain ATCC 17760 / DSM 23089 / LMG 22485 / NCIMB 9086 / R18194 / 383).